Here is a 155-residue protein sequence, read N- to C-terminus: MPKGEGKLIAQNKKAHHDYFIEETYEAGIVLQGTEIKSIRAGKVNLKDSFAKVEKGEVFLHNMHISPYEQGNRYNHDPLRTRKLLLHRREINKLIGYTKEQGYTLVPLKLYIKNGFAKVLLGVGKGKKKYDKREDMKRREAQREIERAFRERQKL.

This sequence belongs to the SmpB family.

It localises to the cytoplasm. In terms of biological role, required for rescue of stalled ribosomes mediated by trans-translation. Binds to transfer-messenger RNA (tmRNA), required for stable association of tmRNA with ribosomes. tmRNA and SmpB together mimic tRNA shape, replacing the anticodon stem-loop with SmpB. tmRNA is encoded by the ssrA gene; the 2 termini fold to resemble tRNA(Ala) and it encodes a 'tag peptide', a short internal open reading frame. During trans-translation Ala-aminoacylated tmRNA acts like a tRNA, entering the A-site of stalled ribosomes, displacing the stalled mRNA. The ribosome then switches to translate the ORF on the tmRNA; the nascent peptide is terminated with the 'tag peptide' encoded by the tmRNA and targeted for degradation. The ribosome is freed to recommence translation, which seems to be the essential function of trans-translation. In Geobacillus sp. (strain WCH70), this protein is SsrA-binding protein.